We begin with the raw amino-acid sequence, 81 residues long: EC protein III (81 aa).

This sequence belongs to the metallothionein superfamily. Type 15 family.

In terms of biological role, binds 5 molecules of zinc. May have a role in Zn(2+) homeostasis during embryogenesis. This chain is EC protein III, found in Triticum aestivum (Wheat).